Consider the following 32-residue polypeptide: Calcitonin-2 (32 aa).

Cysteines 1 and 7 form a disulfide. Proline 32 is modified (proline amide).

Belongs to the calcitonin family.

It is found in the secreted. Causes a rapid but short-lived drop in the level of calcium and phosphate in blood by promoting the incorporation of those ions in the bones. The sequence is that of Calcitonin-2 from Oncorhynchus gorbuscha (Pink salmon).